Reading from the N-terminus, the 254-residue chain is Leucyl/phenylalanyl-tRNA--protein transferase (254 aa).

This sequence belongs to the L/F-transferase family.

The protein localises to the cytoplasm. The catalysed reaction is N-terminal L-lysyl-[protein] + L-leucyl-tRNA(Leu) = N-terminal L-leucyl-L-lysyl-[protein] + tRNA(Leu) + H(+). It carries out the reaction N-terminal L-arginyl-[protein] + L-leucyl-tRNA(Leu) = N-terminal L-leucyl-L-arginyl-[protein] + tRNA(Leu) + H(+). It catalyses the reaction L-phenylalanyl-tRNA(Phe) + an N-terminal L-alpha-aminoacyl-[protein] = an N-terminal L-phenylalanyl-L-alpha-aminoacyl-[protein] + tRNA(Phe). Functionally, functions in the N-end rule pathway of protein degradation where it conjugates Leu, Phe and, less efficiently, Met from aminoacyl-tRNAs to the N-termini of proteins containing an N-terminal arginine or lysine. The sequence is that of Leucyl/phenylalanyl-tRNA--protein transferase from Burkholderia cenocepacia (strain ATCC BAA-245 / DSM 16553 / LMG 16656 / NCTC 13227 / J2315 / CF5610) (Burkholderia cepacia (strain J2315)).